The following is a 286-amino-acid chain: Formamidopyrimidine-DNA glycosylase (286 aa).

The Schiff-base intermediate with DNA role is filled by P2. Residue E3 is the Proton donor of the active site. The active-site Proton donor; for beta-elimination activity is the K61. DNA contacts are provided by H96, R117, and K160. An FPG-type zinc finger spans residues 246–280 (DAYGREGLPCRRCATPMRRRPWMNRSSYFCPKCQR). Residue R270 is the Proton donor; for delta-elimination activity of the active site.

Belongs to the FPG family. Monomer. The cofactor is Zn(2+).

It catalyses the reaction Hydrolysis of DNA containing ring-opened 7-methylguanine residues, releasing 2,6-diamino-4-hydroxy-5-(N-methyl)formamidopyrimidine.. It carries out the reaction 2'-deoxyribonucleotide-(2'-deoxyribose 5'-phosphate)-2'-deoxyribonucleotide-DNA = a 3'-end 2'-deoxyribonucleotide-(2,3-dehydro-2,3-deoxyribose 5'-phosphate)-DNA + a 5'-end 5'-phospho-2'-deoxyribonucleoside-DNA + H(+). Involved in base excision repair of DNA damaged by oxidation or by mutagenic agents. Acts as a DNA glycosylase that recognizes and removes damaged bases. Has a preference for oxidized purines, such as 7,8-dihydro-8-oxoguanine (8-oxoG). Has AP (apurinic/apyrimidinic) lyase activity and introduces nicks in the DNA strand. Cleaves the DNA backbone by beta-delta elimination to generate a single-strand break at the site of the removed base with both 3'- and 5'-phosphates. This is Formamidopyrimidine-DNA glycosylase from Streptomyces avermitilis (strain ATCC 31267 / DSM 46492 / JCM 5070 / NBRC 14893 / NCIMB 12804 / NRRL 8165 / MA-4680).